Consider the following 599-residue polypeptide: DNA primase (599 aa).

A CHC2-type zinc finger spans residues 40 to 64; the sequence is CPFHGENTPSFSVSPDKQLYHCFGC. Residues 259–342 enclose the Toprim domain; the sequence is NEAVLFEGYV…KVAMIPDGLD (84 aa). Residues Glu265, Asp309, and Asp311 each contribute to the Mg(2+) site.

The protein belongs to the DnaG primase family. As to quaternary structure, monomer. Interacts with DnaB. Requires Zn(2+) as cofactor. The cofactor is Mg(2+).

The catalysed reaction is ssDNA + n NTP = ssDNA/pppN(pN)n-1 hybrid + (n-1) diphosphate.. Functionally, RNA polymerase that catalyzes the synthesis of short RNA molecules used as primers for DNA polymerase during DNA replication. The chain is DNA primase from Halalkalibacterium halodurans (strain ATCC BAA-125 / DSM 18197 / FERM 7344 / JCM 9153 / C-125) (Bacillus halodurans).